Here is a 273-residue protein sequence, read N- to C-terminus: Dermonecrotic toxin LapSicTox-alphaIB1aiii (273 aa).

Residue His5 is part of the active site. Residues Glu25 and Asp27 each contribute to the Mg(2+) site. His41 functions as the Nucleophile in the catalytic mechanism. Intrachain disulfides connect Cys45/Cys51 and Cys47/Cys190. Residue Asp85 coordinates Mg(2+). An N-linked (GlcNAc...) asparagine glycan is attached at Asn250.

This sequence belongs to the arthropod phospholipase D family. Class II subfamily. Mg(2+) is required as a cofactor. As to expression, expressed by the venom gland.

The protein resides in the secreted. The enzyme catalyses an N-(acyl)-sphingosylphosphocholine = an N-(acyl)-sphingosyl-1,3-cyclic phosphate + choline. It carries out the reaction an N-(acyl)-sphingosylphosphoethanolamine = an N-(acyl)-sphingosyl-1,3-cyclic phosphate + ethanolamine. The catalysed reaction is a 1-acyl-sn-glycero-3-phosphocholine = a 1-acyl-sn-glycero-2,3-cyclic phosphate + choline. It catalyses the reaction a 1-acyl-sn-glycero-3-phosphoethanolamine = a 1-acyl-sn-glycero-2,3-cyclic phosphate + ethanolamine. Functionally, dermonecrotic toxins cleave the phosphodiester linkage between the phosphate and headgroup of certain phospholipids (sphingolipid and lysolipid substrates), forming an alcohol (often choline) and a cyclic phosphate. This toxin acts on sphingomyelin (SM). It may also act on ceramide phosphoethanolamine (CPE), lysophosphatidylcholine (LPC) and lysophosphatidylethanolamine (LPE), but not on lysophosphatidylserine (LPS), and lysophosphatidylglycerol (LPG). It acts by transphosphatidylation, releasing exclusively cyclic phosphate products as second products. Induces dermonecrosis, hemolysis, increased vascular permeability, edema, inflammatory response, and platelet aggregation. The chain is Dermonecrotic toxin LapSicTox-alphaIB1aiii from Loxosceles apachea (Apache recluse spider).